A 370-amino-acid chain; its full sequence is Anhydro-N-acetylmuramic acid kinase (370 aa).

Position 13 to 20 (13 to 20) interacts with ATP; the sequence is GTSMDGVD.

Belongs to the anhydro-N-acetylmuramic acid kinase family.

The catalysed reaction is 1,6-anhydro-N-acetyl-beta-muramate + ATP + H2O = N-acetyl-D-muramate 6-phosphate + ADP + H(+). The protein operates within amino-sugar metabolism; 1,6-anhydro-N-acetylmuramate degradation. It functions in the pathway cell wall biogenesis; peptidoglycan recycling. Functionally, catalyzes the specific phosphorylation of 1,6-anhydro-N-acetylmuramic acid (anhMurNAc) with the simultaneous cleavage of the 1,6-anhydro ring, generating MurNAc-6-P. Is required for the utilization of anhMurNAc either imported from the medium or derived from its own cell wall murein, and thus plays a role in cell wall recycling. The chain is Anhydro-N-acetylmuramic acid kinase from Shewanella frigidimarina (strain NCIMB 400).